A 435-amino-acid chain; its full sequence is Membrane-bound ghrelin O-acyltransferase MBOAT4 (435 aa).

Residues 1–5 lie on the Lumenal side of the membrane; that stretch reads MDWLQ. A helical transmembrane segment spans residues 6 to 26; the sequence is FFFLHPVSLYQGAAFPFALLF. Over 27–40 the chain is Cytoplasmic; it reads NYLCITESFPTRAR. A helical transmembrane segment spans residues 41 to 56; it reads YLFLLAGGGVLALAAM. The Lumenal segment spans residues 57 to 59; the sequence is GPY. Residues 60 to 76 form a helical membrane-spanning segment; sequence ALLIFIPALCAVAMISS. The Cytoplasmic segment spans residues 77–82; it reads LSPQEV. A helical membrane pass occupies residues 83–101; the sequence is HGLTFFFQMGWQTLCHLGL. Residues 102-120 lie on the Lumenal side of the membrane; the sequence is HYKEYYLCEPPPVRFYITL. Residues 121–136 traverse the membrane as a helical segment; the sequence is SSLMLLTQRVTSLSLD. At 137–206 the chain is on the cytoplasmic side; that stretch reads ISEGKVEAAW…YPSISFWALT (70 aa). The helical transmembrane segment at 207–227 threads the bilayer; it reads WRGLQILGLECLKVALRRVVS. Over 228–240 the chain is Lumenal; sequence AGAGLDDCQRLEC. A helical membrane pass occupies residues 241–261; the sequence is IYIMWSTAGLFKLTYYSHWIL. Residues 262 to 324 are Cytoplasmic-facing; that stretch reads DDSLLHAAGF…KRLVFQRSRR (63 aa). Active-site residues include Asn307 and His338. Residues 325-338 traverse the membrane as a helical segment; the sequence is WPVLQTFAFSAWWH. Residues 339 to 340 lie on the Lumenal side of the membrane; it reads GL. Residues 341 to 357 form a helical membrane-spanning segment; that stretch reads HPGQVFGFLCWSVMVKA. Residues 358 to 376 lie on the Cytoplasmic side of the membrane; that stretch reads DYLIHTFANGCIRSWPLRL. The helical transmembrane segment at 377 to 397 threads the bilayer; sequence LYRSLTWAHTQIIIAYVMLAV. At 398 to 407 the chain is on the lumenal side; that stretch reads EGRSFSSLCR. A helical transmembrane segment spans residues 408-428; it reads LCCSYNSIFPVTYCLLLFLLA. Residues 429–435 lie on the Cytoplasmic side of the membrane; sequence RRKHKCN.

The protein belongs to the membrane-bound acyltransferase family. Monomer. Post-translationally, not glycosylated.

The protein resides in the endoplasmic reticulum membrane. The catalysed reaction is octanoyl-CoA + L-seryl-[protein] = O-octanoyl-L-seryl-[protein] + CoA. It catalyses the reaction decanoyl-CoA + L-seryl-[protein] = O-decanoyl-L-seryl-[protein] + CoA. The enzyme catalyses L-seryl-[protein] + acetyl-CoA = O-acetyl-L-seryl-[protein] + CoA. It carries out the reaction L-seryl-[protein] + butanoyl-CoA = O-butanoyl-L-seryl-[protein] + CoA. The catalysed reaction is pentanoyl-CoA + L-seryl-[protein] = O-pentanoyl-L-seryl-[protein] + CoA. It catalyses the reaction hexanoyl-CoA + L-seryl-[protein] = O-hexanoyl-L-seryl-[protein] + CoA. The enzyme catalyses heptanoyl-CoA + L-seryl-[protein] = O-heptanoyl-L-seryl-[protein] + CoA. It carries out the reaction nonanoyl-CoA + L-seryl-[protein] = O-nonanoyl-L-seryl-[protein] + CoA. The catalysed reaction is L-seryl-[protein] + dodecanoyl-CoA = O-dodecanoyl-L-seryl-[protein] + CoA. It catalyses the reaction L-seryl-[protein] + tetradecanoyl-CoA = O-tetradecanoyl-L-seryl-[protein] + CoA. The enzyme catalyses a fatty acyl-CoA + L-seryl-[protein] = O-fatty acyl-L-seryl-[protein] + CoA. In terms of biological role, catalyzes ghrelin acylation at 'Ser-3' using preferentially octanoyl-CoA, hexanoyl-CoA and decanoyl-CoA as acyl-CoA donors leading to ghrelin activity. In vitro uses also acyl-CoA donors of different lengths from short-chain (C2) to long-chain fatty acids (C16) knowing that acyl-CoA donors from butanoyl-CoA (C4) to dodecanoyl-CoA (C12) are more efficient compared to longer acyl-CoA donors, such as myristoyl-CoA (C14) and palmitoyl-CoA (C16) that are not efficient. This is Membrane-bound ghrelin O-acyltransferase MBOAT4 from Rattus norvegicus (Rat).